The following is a 573-amino-acid chain: 60 kDa heat shock protein, mitochondrial (573 aa).

The transit peptide at 1–26 directs the protein to the mitochondrion; that stretch reads MLRLPAVLRQIRPVSRALAPHLTRAY. ATP contacts are provided by residues Lys75 and 111–115; that span reads DGTTT. A Phosphotyrosine modification is found at Tyr227. Residues Gly440 and Asp520 each coordinate ATP.

The protein resides in the mitochondrion matrix. It carries out the reaction ATP + H2O + a folded polypeptide = ADP + phosphate + an unfolded polypeptide.. Its function is as follows. Chaperonin implicated in mitochondrial protein import and macromolecular assembly. Together with Hsp10, facilitates the correct folding of imported proteins. May also prevent misfolding and promote the refolding and proper assembly of unfolded polypeptides generated under stress conditions in the mitochondrial matrix. The functional units of these chaperonins consist of heptameric rings of the large subunit Hsp60, which function as a back-to-back double ring. In a cyclic reaction, Hsp60 ring complexes bind one unfolded substrate protein per ring, followed by the binding of ATP and association with 2 heptameric rings of the co-chaperonin Hsp10. This leads to sequestration of the substrate protein in the inner cavity of Hsp60 where, for a certain period of time, it can fold undisturbed by other cell components. Synchronous hydrolysis of ATP in all Hsp60 subunits results in the dissociation of the chaperonin rings and the release of ADP and the folded substrate protein. This is 60 kDa heat shock protein, mitochondrial from Gallus gallus (Chicken).